The chain runs to 635 residues: Leucine aminopeptidase 2-2 (635 aa).

Substrate contacts are provided by residues 141-143 and 265-270; these read QCQ and PYGGME. Residue H294 coordinates Zn(2+). E295 serves as the catalytic Proton acceptor. Positions 298 and 317 each coordinate Zn(2+). Y399 acts as the Proton donor in catalysis.

The protein belongs to the peptidase M1 family. The cofactor is Zn(2+).

It is found in the cytoplasm. Its subcellular location is the nucleus. It carries out the reaction an epoxide + H2O = an ethanediol. In terms of biological role, aminopeptidase that preferentially cleaves di- and tripeptides. Also has low epoxide hydrolase activity (in vitro). Can hydrolyze the epoxide leukotriene LTA(4) but it forms preferentially 5,6-dihydroxy-7,9,11,14-eicosatetraenoic acid rather than the cytokine leukotriene B(4) as the product compared to the homologous mammalian enzyme (in vitro). This Scheffersomyces stipitis (strain ATCC 58785 / CBS 6054 / NBRC 10063 / NRRL Y-11545) (Yeast) protein is Leucine aminopeptidase 2-2 (LTA4).